Here is a 175-residue protein sequence, read N- to C-terminus: Shikimate kinase (175 aa).

10–15 contacts ATP; sequence GAGKTT. T14 serves as a coordination point for Mg(2+). 3 residues coordinate substrate: D32, R56, and G78. R116 lines the ATP pocket. Residue R135 participates in substrate binding.

It belongs to the shikimate kinase family. Monomer. The cofactor is Mg(2+).

Its subcellular location is the cytoplasm. The enzyme catalyses shikimate + ATP = 3-phosphoshikimate + ADP + H(+). The protein operates within metabolic intermediate biosynthesis; chorismate biosynthesis; chorismate from D-erythrose 4-phosphate and phosphoenolpyruvate: step 5/7. Catalyzes the specific phosphorylation of the 3-hydroxyl group of shikimic acid using ATP as a cosubstrate. In Aromatoleum aromaticum (strain DSM 19018 / LMG 30748 / EbN1) (Azoarcus sp. (strain EbN1)), this protein is Shikimate kinase.